The chain runs to 267 residues: PF03932 family protein CutC (267 aa).

It belongs to the CutC family.

The protein resides in the cytoplasm. In Xylella fastidiosa (strain Temecula1 / ATCC 700964), this protein is PF03932 family protein CutC.